The chain runs to 122 residues: Ribosomal protein eL22-like 1 (122 aa).

Residues serine 112, serine 118, and serine 120 each carry the phosphoserine modification.

Belongs to the eukaryotic ribosomal protein eL22 family.

The polypeptide is Ribosomal protein eL22-like 1 (Rpl22l1) (Mus musculus (Mouse)).